Consider the following 458-residue polypeptide: UDP-N-acetylmuramoylalanine--D-glutamate ligase (458 aa).

Residue 124 to 130 (GSDGKTT) participates in ATP binding.

It belongs to the MurCDEF family.

Its subcellular location is the cytoplasm. The catalysed reaction is UDP-N-acetyl-alpha-D-muramoyl-L-alanine + D-glutamate + ATP = UDP-N-acetyl-alpha-D-muramoyl-L-alanyl-D-glutamate + ADP + phosphate + H(+). Its pathway is cell wall biogenesis; peptidoglycan biosynthesis. Its function is as follows. Cell wall formation. Catalyzes the addition of glutamate to the nucleotide precursor UDP-N-acetylmuramoyl-L-alanine (UMA). The chain is UDP-N-acetylmuramoylalanine--D-glutamate ligase from Clostridium botulinum (strain Loch Maree / Type A3).